The following is a 64-amino-acid chain: Large ribosomal subunit protein bL28 (64 aa).

Belongs to the bacterial ribosomal protein bL28 family.

This chain is Large ribosomal subunit protein bL28, found in Persephonella marina (strain DSM 14350 / EX-H1).